A 279-amino-acid chain; its full sequence is HTH-type transcriptional activator RhaS (279 aa).

The HTH araC/xylS-type domain occupies 175–273 (QALLGWLQNN…SQAPKSLRHQ (99 aa)). DNA-binding regions (H-T-H motif) lie at residues 192-213 (GSLA…KQHT) and 240-263 (ITTI…RKAF).

Binds DNA as a dimer.

The protein localises to the cytoplasm. Its function is as follows. Activates expression of the rhaBAD and rhaT operons. The polypeptide is HTH-type transcriptional activator RhaS (Pectobacterium carotovorum subsp. carotovorum (strain PC1)).